Consider the following 383-residue polypeptide: Dimethylsulfoniopropionate lyase 6 (383 aa).

The protein belongs to the aspartate/glutamate racemases family. ALMA1 subfamily. Homotetramer.

The enzyme catalyses S,S-dimethyl-beta-propiothetin = acrylate + dimethyl sulfide + H(+). Its function is as follows. Mediates cleavage of dimethylsulfoniopropionate (DMSP) into dimethyl sulfide (DMS) and acrylate. DMS is the principal form by which sulfur is transported from oceans to the atmosphere and is a key component of the ocean sulfur cycle. This Emiliania huxleyi (strain CCMP1516) protein is Dimethylsulfoniopropionate lyase 6.